A 306-amino-acid chain; its full sequence is Pantothenate kinase (306 aa).

90 to 97 (GSVAVGKS) is an ATP binding site.

It belongs to the prokaryotic pantothenate kinase family.

The protein resides in the cytoplasm. It carries out the reaction (R)-pantothenate + ATP = (R)-4'-phosphopantothenate + ADP + H(+). The protein operates within cofactor biosynthesis; coenzyme A biosynthesis; CoA from (R)-pantothenate: step 1/5. The polypeptide is Pantothenate kinase (Listeria welshimeri serovar 6b (strain ATCC 35897 / DSM 20650 / CCUG 15529 / CIP 8149 / NCTC 11857 / SLCC 5334 / V8)).